Reading from the N-terminus, the 428-residue chain is Putative gustatory receptor 2a (428 aa).

Over 1-40 (MDTLRALEPLHRACQVCNLWPWRLAPPPDSEGILLRRSRW) the chain is Cytoplasmic. A helical membrane pass occupies residues 41–61 (LELYGWTVLIAATSFTVYGLF). Residues 62–145 (QESSVEEKQD…INMRRQTSRR (84 aa)) are Extracellular-facing. The helical transmembrane segment at 146–166 (AVWILWGYAVSQLLILGAKLL) threads the bilayer. Residues 167-173 (SRGDRFP) lie on the Cytoplasmic side of the membrane. Residues 174–194 (IYWISYLLPLLVCGLRYFQIF) traverse the membrane as a helical segment. N-linked (GlcNAc...) asparagine glycosylation is present at Asn-195. Over 195–250 (NATQLVRQRLDVLLVALQQLQLHQKGPAVDTVLEEQEDLEEAAMDRLIAVRLVYQR) the chain is Extracellular. The chain crosses the membrane as a helical span at residues 251–271 (VWALVALLNRCYGLSMLMQVG). Residues 272–300 (NDFLAITSNCYWMFLNFRQSAASPFDILQ) lie on the Cytoplasmic side of the membrane. A helical membrane pass occupies residues 301 to 321 (IVASGVWSAPHLGNVLVLSLL). At 322–349 (CDRTAQCASRLALCLHQVSVDLRNESHN) the chain is on the extracellular side. A glycan (N-linked (GlcNAc...) asparagine) is linked at Asn-345. A helical transmembrane segment spans residues 350–370 (ALVGTLVRYCAPLIILVPLQI). Residues 371 to 395 (TQFSLQLLHQRLHFSAAGFFNVDCT) are Cytoplasmic-facing. Residues 396-416 (LLYTIVGATTTYLIILIQFHM) traverse the membrane as a helical segment. Over 417-428 (SESTIGSDSNGQ) the chain is Extracellular.

The protein belongs to the insect chemoreceptor superfamily. Gustatory receptor (GR) family. Gr2a subfamily. Expressed in neurons of the terminal external chemosensory organ, the dorsal external chemosensory organ, as well as in the dorsal pharyngeal sense organ of larvae.

The protein localises to the cell membrane. In terms of biological role, probable gustatory receptor which mediates acceptance or avoidance behavior, depending on its not yet determined substrates. The chain is Putative gustatory receptor 2a (Gr2a) from Drosophila melanogaster (Fruit fly).